Reading from the N-terminus, the 208-residue chain is OVARIAN TUMOR DOMAIN-containing deubiquitinating enzyme 2 (208 aa).

An OTU domain is found at 5-127 (IVRRVIPSDN…GLHYDALALS (123 aa)). The active site involves D13. C16 (nucleophile) is an active-site residue. Residues H120 and H201 contribute to the active site.

It belongs to the peptidase C85 family.

It carries out the reaction Thiol-dependent hydrolysis of ester, thioester, amide, peptide and isopeptide bonds formed by the C-terminal Gly of ubiquitin (a 76-residue protein attached to proteins as an intracellular targeting signal).. Functionally, hydrolase that can remove conjugated ubiquitin from proteins in vitro and may therefore play an important regulatory role at the level of protein turnover by preventing degradation. Cysteine protease with a preference for 'Lys-63' and 'Lys-48' -linked ubiquitin (UB) tetramers as substrates. In Arabidopsis thaliana (Mouse-ear cress), this protein is OVARIAN TUMOR DOMAIN-containing deubiquitinating enzyme 2.